The following is a 343-amino-acid chain: Single-pass membrane and coiled-coil domain-containing protein 2 (343 aa).

A compositionally biased stretch (basic and acidic residues) spans 86 to 99; that stretch reads EHDQDLSKQDKQET. The tract at residues 86-108 is disordered; that stretch reads EHDQDLSKQDKQETDVDEDPQAS. A coiled-coil region spans residues 152–238; that stretch reads TEKIDNIIKK…SAKLRMYQME (87 aa). Residues 284–304 form a helical membrane-spanning segment; that stretch reads IFIMFDVLTVTGLLCYILFFG.

It localises to the membrane. The chain is Single-pass membrane and coiled-coil domain-containing protein 2 (SMCO2) from Homo sapiens (Human).